The sequence spans 468 residues: Bifunctional protein GlmU (468 aa).

Residues 1–233 (MAQAGSASPL…LEEANLVNDR (233 aa)) are pyrophosphorylase. UDP-N-acetyl-alpha-D-glucosamine-binding positions include 15 to 18 (LAAG), lysine 29, glutamine 79, and 84 to 85 (GT). Aspartate 109 serves as a coordination point for Mg(2+). Residues glycine 146, glutamate 159, asparagine 174, and asparagine 231 each contribute to the UDP-N-acetyl-alpha-D-glucosamine site. Residue asparagine 231 coordinates Mg(2+). The segment at 234–254 (SQLARAEEILRRRILDAHMKE) is linker. The tract at residues 255–468 (GVTVRDPVST…GDRRRARTEG (214 aa)) is N-acetyltransferase. UDP-N-acetyl-alpha-D-glucosamine is bound by residues arginine 336 and lysine 354. Histidine 366 (proton acceptor) is an active-site residue. UDP-N-acetyl-alpha-D-glucosamine is bound by residues tyrosine 369 and asparagine 380. Acetyl-CoA-binding positions include alanine 383, 389–390 (NY), and alanine 426.

The protein in the N-terminal section; belongs to the N-acetylglucosamine-1-phosphate uridyltransferase family. This sequence in the C-terminal section; belongs to the transferase hexapeptide repeat family. In terms of assembly, homotrimer. The cofactor is Mg(2+).

It localises to the cytoplasm. It carries out the reaction alpha-D-glucosamine 1-phosphate + acetyl-CoA = N-acetyl-alpha-D-glucosamine 1-phosphate + CoA + H(+). The enzyme catalyses N-acetyl-alpha-D-glucosamine 1-phosphate + UTP + H(+) = UDP-N-acetyl-alpha-D-glucosamine + diphosphate. The protein operates within nucleotide-sugar biosynthesis; UDP-N-acetyl-alpha-D-glucosamine biosynthesis; N-acetyl-alpha-D-glucosamine 1-phosphate from alpha-D-glucosamine 6-phosphate (route II): step 2/2. It functions in the pathway nucleotide-sugar biosynthesis; UDP-N-acetyl-alpha-D-glucosamine biosynthesis; UDP-N-acetyl-alpha-D-glucosamine from N-acetyl-alpha-D-glucosamine 1-phosphate: step 1/1. It participates in bacterial outer membrane biogenesis; LPS lipid A biosynthesis. Catalyzes the last two sequential reactions in the de novo biosynthetic pathway for UDP-N-acetylglucosamine (UDP-GlcNAc). The C-terminal domain catalyzes the transfer of acetyl group from acetyl coenzyme A to glucosamine-1-phosphate (GlcN-1-P) to produce N-acetylglucosamine-1-phosphate (GlcNAc-1-P), which is converted into UDP-GlcNAc by the transfer of uridine 5-monophosphate (from uridine 5-triphosphate), a reaction catalyzed by the N-terminal domain. The chain is Bifunctional protein GlmU from Rubrobacter xylanophilus (strain DSM 9941 / JCM 11954 / NBRC 16129 / PRD-1).